A 321-amino-acid polypeptide reads, in one-letter code: Acetyl-coenzyme A carboxylase carboxyl transferase subunit alpha (321 aa).

One can recognise a CoA carboxyltransferase C-terminal domain in the interval 39-293; sequence RLQQKSQNLA…RRALGDALRQ (255 aa).

The protein belongs to the AccA family. As to quaternary structure, acetyl-CoA carboxylase is a heterohexamer composed of biotin carboxyl carrier protein (AccB), biotin carboxylase (AccC) and two subunits each of ACCase subunit alpha (AccA) and ACCase subunit beta (AccD).

It is found in the cytoplasm. It carries out the reaction N(6)-carboxybiotinyl-L-lysyl-[protein] + acetyl-CoA = N(6)-biotinyl-L-lysyl-[protein] + malonyl-CoA. It functions in the pathway lipid metabolism; malonyl-CoA biosynthesis; malonyl-CoA from acetyl-CoA: step 1/1. Its function is as follows. Component of the acetyl coenzyme A carboxylase (ACC) complex. First, biotin carboxylase catalyzes the carboxylation of biotin on its carrier protein (BCCP) and then the CO(2) group is transferred by the carboxyltransferase to acetyl-CoA to form malonyl-CoA. The sequence is that of Acetyl-coenzyme A carboxylase carboxyl transferase subunit alpha from Bordetella bronchiseptica (strain ATCC BAA-588 / NCTC 13252 / RB50) (Alcaligenes bronchisepticus).